Here is a 42-residue protein sequence, read N- to C-terminus: Photosystem I reaction center subunit IX (42 aa).

Residues 7 to 27 (FLSLGPVLLVLWLSVQATLLI) traverse the membrane as a helical segment.

Belongs to the PsaJ family.

It localises to the cellular thylakoid membrane. In terms of biological role, may help in the organization of the PsaE and PsaF subunits. The sequence is that of Photosystem I reaction center subunit IX from Gloeothece citriformis (strain PCC 7424) (Cyanothece sp. (strain PCC 7424)).